Consider the following 338-residue polypeptide: Ketol-acid reductoisomerase (NADP(+)) (338 aa).

Residues 1 to 181 form the KARI N-terminal Rossmann domain; the sequence is MKVFYDKDCD…GGGRAGIIET (181 aa). Residues 24-27, Arg47, and Ser52 contribute to the NADP(+) site; that span reads YGSQ. His107 is an active-site residue. Position 133 (Gly133) interacts with NADP(+). Residues 182 to 327 enclose the KARI C-terminal knotted domain; sequence NFREETETDL…GKLRAMMPWI (146 aa). Residues Asp190, Glu194, Glu226, and Glu230 each contribute to the Mg(2+) site. Residue Ser251 participates in substrate binding.

This sequence belongs to the ketol-acid reductoisomerase family. The cofactor is Mg(2+).

It catalyses the reaction (2R)-2,3-dihydroxy-3-methylbutanoate + NADP(+) = (2S)-2-acetolactate + NADPH + H(+). The enzyme catalyses (2R,3R)-2,3-dihydroxy-3-methylpentanoate + NADP(+) = (S)-2-ethyl-2-hydroxy-3-oxobutanoate + NADPH + H(+). It functions in the pathway amino-acid biosynthesis; L-isoleucine biosynthesis; L-isoleucine from 2-oxobutanoate: step 2/4. It participates in amino-acid biosynthesis; L-valine biosynthesis; L-valine from pyruvate: step 2/4. Functionally, involved in the biosynthesis of branched-chain amino acids (BCAA). Catalyzes an alkyl-migration followed by a ketol-acid reduction of (S)-2-acetolactate (S2AL) to yield (R)-2,3-dihydroxy-isovalerate. In the isomerase reaction, S2AL is rearranged via a Mg-dependent methyl migration to produce 3-hydroxy-3-methyl-2-ketobutyrate (HMKB). In the reductase reaction, this 2-ketoacid undergoes a metal-dependent reduction by NADPH to yield (R)-2,3-dihydroxy-isovalerate. This Bordetella bronchiseptica (strain ATCC BAA-588 / NCTC 13252 / RB50) (Alcaligenes bronchisepticus) protein is Ketol-acid reductoisomerase (NADP(+)).